The following is a 56-amino-acid chain: Secreted virulence factor CLU5a (56 aa).

The signal sequence occupies residues 1-18 (MKVSLTLLATLCASLASA).

This sequence belongs to the MC69 virulence factor family. In terms of assembly, homodimer; disulfide-linked. Dimerization can possibly extend to multimerisation.

The protein localises to the secreted. Secreted protein required for appressorial penetration of intact host epidermal cells and for pathogenicit, but not for subsequent biotrophic and necrotrophic colonization of leaves. The protein is Secreted virulence factor CLU5a of Colletotrichum graminicola (strain M1.001 / M2 / FGSC 10212) (Maize anthracnose fungus).